Here is a 185-residue protein sequence, read N- to C-terminus: Ribosome-recycling factor (185 aa).

This sequence belongs to the RRF family.

It is found in the cytoplasm. Its function is as follows. Responsible for the release of ribosomes from messenger RNA at the termination of protein biosynthesis. May increase the efficiency of translation by recycling ribosomes from one round of translation to another. This chain is Ribosome-recycling factor, found in Syntrophobacter fumaroxidans (strain DSM 10017 / MPOB).